The primary structure comprises 146 residues: MTPAVQNSYIAFLISSNHHDPNLFLLLQNHASIRVMVRRRDIALTTVNEDDVEYEYEHLHSTLLSQIFGIADAVYPNPSRHLLIDMLKYSGYDNVDDWISDFCSSLPRNVARRSSYLCLHHGHASKWHNNKNVLVYLVTVVVNKIV.

This is an uncharacterized protein from Acidianus filamentous virus 2 (isolate Italy/Pozzuoli) (AFV-2).